The following is an 85-amino-acid chain: CRISPR-associated endoribonuclease Cas2 (85 aa).

Residue Asp-8 participates in Mg(2+) binding.

It belongs to the CRISPR-associated endoribonuclease Cas2 protein family. As to quaternary structure, homodimer, forms a heterotetramer with a Cas1 homodimer. The cofactor is Mg(2+).

Functionally, CRISPR (clustered regularly interspaced short palindromic repeat), is an adaptive immune system that provides protection against mobile genetic elements (viruses, transposable elements and conjugative plasmids). CRISPR clusters contain sequences complementary to antecedent mobile elements and target invading nucleic acids. CRISPR clusters are transcribed and processed into CRISPR RNA (crRNA). Functions as a ssRNA-specific endoribonuclease. Involved in the integration of spacer DNA into the CRISPR cassette. The chain is CRISPR-associated endoribonuclease Cas2 from Pyrococcus furiosus (strain ATCC 43587 / DSM 3638 / JCM 8422 / Vc1).